The primary structure comprises 1327 residues: ABC transporter 1 (1327 aa).

6 consecutive transmembrane segments (helical) span residues 47–67 (LGIL…IIFG), 100–120 (VYVG…WNLF), 170–190 (KVGI…IAFV), 195–215 (LGGE…VGGY), 228–248 (VAGA…VHAF), and 276–296 (VAVQ…LAFW). The region spanning 47–326 (LGILAAIASG…TTYTVIFLLV (280 aa)) is the ABC transmembrane type-1 1 domain. 3 N-linked (GlcNAc...) asparagine glycosylation sites follow: Asn-381, Asn-390, and Asn-406. The ABC transporter 1 domain maps to 386 to 663 (IELNNVSFAF…DGAYAGLVRL (278 aa)). 421–428 (GLSGSGKS) provides a ligand contact to ATP. 2 N-linked (GlcNAc...) asparagine glycosylation sites follow: Asn-463 and Asn-674. 6 helical membrane-spanning segments follow: residues 743 to 763 (FLAL…AVVF), 785 to 805 (FYGL…LGSW), 859 to 881 (LTGS…IALS), 888 to 910 (IALV…VITM), 971 to 991 (LWLA…YWWG), and 1005 to 1025 (FFIV…MFTL). Positions 743-1031 (FLALTSAFVV…MFTLAPDVSR (289 aa)) constitute an ABC transmembrane type-1 2 domain. The N-linked (GlcNAc...) asparagine glycan is linked to Asn-1050. The segment at 1054 to 1081 (PCQHLKPGNDLEANAEPREKRPDQSQGG) is disordered. In terms of domain architecture, ABC transporter 2 spans 1084–1323 (VSLNNVKFSY…SESYKINALH (240 aa)). 1119–1126 (GPSGAGKS) contacts ATP.

Belongs to the ABC transporter superfamily. ABCB family. Multidrug resistance exporter (TC 3.A.1.201) subfamily.

It localises to the membrane. Its function is as follows. ABC transporter; part of the gene cluster that mediates the biosynthesis of hydroxamate-containing siderophores that play a critical role in virulence via intracellular iron acquisition during macrophage infection. Probably involved in the excretion of the extracellular siderophores. The chain is ABC transporter 1 from Ajellomyces capsulatus (Darling's disease fungus).